Reading from the N-terminus, the 190-residue chain is Dual-action ribosomal maturation protein DarP (190 aa).

The interval 1–31 is disordered; sequence MIHADHDDNLPDDEEGLPLPPSKSQRKRDMH.

This sequence belongs to the DarP family.

Its subcellular location is the cytoplasm. Member of a network of 50S ribosomal subunit biogenesis factors which assembles along the 30S-50S interface, preventing incorrect 23S rRNA structures from forming. Promotes peptidyl transferase center (PTC) maturation. The protein is Dual-action ribosomal maturation protein DarP of Aromatoleum aromaticum (strain DSM 19018 / LMG 30748 / EbN1) (Azoarcus sp. (strain EbN1)).